Consider the following 956-residue polypeptide: MPRVSAPLVLLPAWLLMVACSPHSLRIAAILDDPMECSRGERLSITLAKNRINRAPERLGKAKVEVDIFELLRDSEYETAETMCQILPKGVVAVLGPSSSPASSSIISNICGEKEVPHFKVAPEEFVRFQLQRFTTLNLHPSNTDISVAVAGILNFFNCTTACLICAKAECLLNLEKLLRQFLISKDTLSVRMLDDTRDPTPLLKEIRDDKTATIIIHANASMSHTILLKAAELGMVSAYYTYIFTNLEFSLQRMDSLVDDRVNILGFSIFNQSHAFFQEFSQSLNQSWQENCDHVPFTGPALSSALLFDAVYAVVTAVQELNRSQEIGVKPLSCGSAQIWQHGTSLMNYLRMVELEGLTGHIEFNSKGQRSNYALKILQFTRNGFQQIGQWHVAEGLSMDSRLYASNISDSLFNTTLVVTTILENPYLMLKGNHQEMEGNDRYEGFCVDMLKELAEILRFNYKIRLVGDGVYGVPEANGTWTGMVGELIARKADLAVAGLTITAEREKVIDFSKPFMTLGISILYRVHMGRRPGYFSFLDPFSPGVWLFMLLAYLAVSCVLFLVARLTPYEWYSPHPCAQGRCNLLVNQYSLGNSLWFPVGGFMQQGSTIAPRALSTRCVSGVWWAFTLIIISSYTANLAAFLTVQRMEVPIESVDDLADQTAIEYGTIHGGSSMTFFQNSRYQTYQRMWNYMYSKQPSVFVKSTEEGIARVLNSNYAFLLESTMNEYYRQRNCNLTQIGGLLDTKGYGIGMPVGSVFRDEFDLAILQLQENNRLEILKRKWWEGGKCPKEEDHRAKGLGMENIGGIFVVLICGLIVAIFMAMLEFLWTLRHSEASEVSVCQEMVTELRNIILCQDNIHPRRRRSGGLPPQPPVLEERRPRGTATLSNGKLCGAGEPDQLAQRLAQEAALVARGCTHIRVCPECRRFQGLRARPSPARSEESLEWDKTTNSSEPE.

An N-terminal signal peptide occupies residues 1–20 (MPRVSAPLVLLPAWLLMVAC). The Extracellular portion of the chain corresponds to 21 to 545 (SPHSLRIAAI…YFSFLDPFSP (525 aa)). Residues Asn-158, Asn-220, Asn-272, Asn-286, Asn-323, Asn-408, Asn-415, and Asn-479 are each glycosylated (N-linked (GlcNAc...) asparagine). The L-glutamate site is built by Gly-500, Thr-502, and Arg-507. A helical transmembrane segment spans residues 546 to 566 (GVWLFMLLAYLAVSCVLFLVA). The Cytoplasmic portion of the chain corresponds to 567–623 (RLTPYEWYSPHPCAQGRCNLLVNQYSLGNSLWFPVGGFMQQGSTIAPRALSTRCVSG). Residues 624 to 644 (VWWAFTLIIISSYTANLAAFL) traverse the membrane as a helical segment. Residues 645 to 804 (TVQRMEVPIE…HRAKGLGMEN (160 aa)) are Extracellular-facing. Residues Ser-674, Ser-675, and Glu-723 each contribute to the L-glutamate site. Asn-736 carries N-linked (GlcNAc...) asparagine glycosylation. A helical transmembrane segment spans residues 805–825 (IGGIFVVLICGLIVAIFMAML). At 826 to 956 (EFLWTLRHSE…DKTTNSSEPE (131 aa)) the chain is on the cytoplasmic side. The interval 931–956 (LRARPSPARSEESLEWDKTTNSSEPE) is disordered. Residues 939–948 (RSEESLEWDK) show a composition bias toward basic and acidic residues.

Belongs to the glutamate-gated ion channel (TC 1.A.10.1) family. GRIK4 subfamily. In terms of assembly, homodimer. Can form functional heteromeric receptors with GRIK1, GRIK2 and GRIK3 subunits. Forms a heteromeric complex with GRIK2. Expressed in the hippocampus and cerebellum (at protein level).

The protein localises to the cell membrane. The protein resides in the postsynaptic cell membrane. Its subcellular location is the presynaptic cell membrane. Ionotropic glutamate receptor that functions as a cation-permeable ligand-gated ion channel. Cannot form functional channels on its own and produces channel activity only in heteromeric assembly with GRIK1, GRIK2 and GRIK3 subunits. In Mus musculus (Mouse), this protein is Glutamate receptor ionotropic, kainate 4 (Grik4).